We begin with the raw amino-acid sequence, 638 residues long: NBPF family member NBPF6 (638 aa).

Coiled-coil stretches lie at residues 10–43 and 69–115; these read SERA…EKFL and DSVL…KLRE. The tract at residues 157–285 is disordered; sequence HLVHKLSPEN…VPPRHHDKSN (129 aa). Over residues 165–179 the composition is skewed to acidic residues; it reads ENDEDEDEDEDDKDE. One can recognise an Olduvai 1 domain in the interval 174-261; the sequence is EDDKDEEVEK…EEEEALNIPP (88 aa). Over residues 192 to 202 the composition is skewed to basic and acidic residues; that stretch reads EVQKTEEKEVP. The span at 214–226 shows a compositional bias: low complexity; sequence SNSHNPSNSNQPH. 2 stretches are compositionally biased toward basic and acidic residues: residues 232–251 and 264–273; these read TFKE…HPHD and QNDHEEEEGK. 2 Olduvai domains span residues 326-399 and 400-503; these read EKQS…ALVD and KIKK…SQAQ. The tract at residues 563-584 is disordered; that stretch reads MKNPPQLEDDALEGSASNTQGR.

Belongs to the NBPF family.

The protein localises to the cytoplasm. The chain is NBPF family member NBPF6 from Homo sapiens (Human).